A 509-amino-acid chain; its full sequence is Solute carrier family 2, facilitated glucose transporter member 4 (509 aa).

Over 1–24 (MPSGFQQIGSEDGEPPQQRVTGTL) the chain is Cytoplasmic. Positions 7 to 13 (QIGSEDG) are interaction with SRFBP1. S10 is subject to Phosphoserine. Residues 25–45 (VLAVFSAVLGSLQFGYNIGVI) form a helical membrane-spanning segment. At 46–81 (NAPQKVIEQSYNETWLGRQGPEGPSSIPPGTLTTLW) the chain is on the extracellular side. Residue N57 is glycosylated (N-linked (GlcNAc...) asparagine). Residues 82 to 102 (ALSVAIFSVGGMISSFLIGII) form a helical membrane-spanning segment. Residues 103–111 (SQWLGRKRA) are Cytoplasmic-facing. The chain crosses the membrane as a helical span at residues 112–132 (MLVNNVLAVLGGSLMGLANAA). The Extracellular portion of the chain corresponds to 133–142 (ASYEMLILGR). A helical transmembrane segment spans residues 143–163 (FLIGAYSGLTSGLVPMYVGEI). The Cytoplasmic segment spans residues 164–171 (APTHLRGA). Residues 172–192 (LGTLNQLAIVIGILIAQVLGL) form a helical membrane-spanning segment. Q177 provides a ligand contact to D-glucose. Residues 193–201 (ESLLGTASL) lie on the Extracellular side of the membrane. A helical membrane pass occupies residues 202–222 (WPLLLGLTVLPALLQLVLLPF). The S-palmitoyl cysteine moiety is linked to residue C223. Topologically, residues 223–287 (CPESPRYLYI…LLGSRTHRQP (65 aa)) are cytoplasmic. S274 carries the post-translational modification Phosphoserine; by SGK1. The chain crosses the membrane as a helical span at residues 288–308 (LIIAVVLQLSQQLSGINAVFY). Residues 298–299 (QQ) and N304 each bind D-glucose. At 309–323 (YSTSIFETAGVGQPA) the chain is on the extracellular side. The chain crosses the membrane as a helical span at residues 324–344 (YATIGAGVVNTVFTLVSVLLV). D-glucose is bound at residue N333. The Cytoplasmic portion of the chain corresponds to 345-353 (ERAGRRTLH). A helical transmembrane segment spans residues 354–374 (LLGLAGMCGCAILMTVALLLL). Over 375 to 384 (ERVPAMSYVS) the chain is Extracellular. A helical transmembrane segment spans residues 385–405 (IVAIFGFVAFFEIGPGPIPWF). 2 residues coordinate D-glucose: E396 and W404. Residues 406 to 417 (IVAELFSQGPRP) lie on the Cytoplasmic side of the membrane. The chain crosses the membrane as a helical span at residues 418 to 438 (AAMAVAGFSNWTSNFIIGMGF). The Extracellular segment spans residues 439 to 445 (QYVAEAM). Residues 446–466 (GPYVFLLFAVLLLGFFIFTFL) traverse the membrane as a helical segment. Topologically, residues 467 to 509 (RVPETRGRTFDQISAAFHRTPSLLEQEVKPSTELEYLGPDEND) are cytoplasmic. T486 bears the Phosphothreonine mark. Phosphoserine is present on S488. A Dileucine internalization motif motif is present at residues 489–490 (LL).

This sequence belongs to the major facilitator superfamily. Sugar transporter (TC 2.A.1.1) family. Glucose transporter subfamily. Interacts with NDUFA9. Binds to DAXX. Interacts via its N-terminus with SRFBP1. Interacts with TRARG1; the interaction is required for proper SLC2A4 recycling after insulin stimulation. Sumoylated. In terms of processing, palmitoylated. Palmitoylation by ZDHHC7 controls the insulin-dependent translocation of GLUT4 to the plasma membrane. In terms of tissue distribution, skeletal and cardiac muscles; brown and white fat.

It localises to the cell membrane. Its subcellular location is the endomembrane system. It is found in the cytoplasm. The protein localises to the perinuclear region. The catalysed reaction is D-glucose(out) = D-glucose(in). Functionally, insulin-regulated facilitative glucose transporter, which plays a key role in removal of glucose from circulation. Response to insulin is regulated by its intracellular localization: in the absence of insulin, it is efficiently retained intracellularly within storage compartments in muscle and fat cells. Upon insulin stimulation, translocates from these compartments to the cell surface where it transports glucose from the extracellular milieu into the cell. This Homo sapiens (Human) protein is Solute carrier family 2, facilitated glucose transporter member 4.